The primary structure comprises 364 residues: Histidinol-phosphate aminotransferase 1 (364 aa).

Lysine 211 carries the post-translational modification N6-(pyridoxal phosphate)lysine.

It belongs to the class-II pyridoxal-phosphate-dependent aminotransferase family. Histidinol-phosphate aminotransferase subfamily. Homodimer. The cofactor is pyridoxal 5'-phosphate.

It carries out the reaction L-histidinol phosphate + 2-oxoglutarate = 3-(imidazol-4-yl)-2-oxopropyl phosphate + L-glutamate. It participates in amino-acid biosynthesis; L-histidine biosynthesis; L-histidine from 5-phospho-alpha-D-ribose 1-diphosphate: step 7/9. The protein is Histidinol-phosphate aminotransferase 1 of Legionella pneumophila (strain Paris).